A 1086-amino-acid polypeptide reads, in one-letter code: Formin-like protein 2 (1086 aa).

Gly-2 carries the N-myristoyl glycine lipid modification. The GBD/FH3 domain maps to 23 to 469 (LPMPEPGELE…EAIQRQSTLE (447 aa)). Ser-188 is subject to Phosphoserine. The interval 513-597 (SVGPTMGAAS…APPLPSAPPL (85 aa)) is disordered. Positions 525 to 537 (PLPPPPPPLPPSS) are enriched in pro residues. Over residues 538-547 (DTPETVQNGP) the composition is skewed to polar residues. Pro residues-rich tracts occupy residues 548–576 (VTPPMPPPPPPPPPPPPPPPPPPPPPLPG) and 583–597 (PAPPLAPPLPSAPPL). The 392-residue stretch at 616–1007 (IKKPIKTKFR…LMEKLLEQEA (392 aa)) folds into the FH2 domain. The DAD domain maps to 1040-1079 (NRHVYEGKDGAIEDIITVLKTVPFTARTAKRGSRFFCEPV).

It belongs to the formin homology family.

It is found in the cytoplasm. Its function is as follows. Plays a role in the regulation of cell morphology and cytoskeletal organization. Required in the cortical actin filament dynamics. This is Formin-like protein 2 from Homo sapiens (Human).